Here is a 917-residue protein sequence, read N- to C-terminus: MASNIFSRLVPQDRGRSFYEDLRQTDPDADLESRAGIDIDEENLNRSYHDYDLDEAERLAGDESHISHSRGDVAGANTVHRRGQKANTARWLGAGVEDDVDNDVPESLLVETPRAPQHLLLSPSRAGPSHPRPTAVPGPSTRQNQAQWEATRHQQRLHNDDTMPHGPFSGRAGQGRPEPPPVGLMAGDPYEQAMWRWVNVSNLDNFIKDVYAYYRAAGFWCIIVQRILELVNAAFVAVFLTFLSQCVDYHKLPHSKKMEDIIIPKCTQNMSLVWNVGLWLFAIYFICRCFGLIIQLRQLKHLRDFYTHLLKIPEADMQSVSWQDVVGRIMALRDSHPRTAGNLTRVQRAWIGSQSKERLDAHDIANRIMRRENFMIAMLNKDVLDLTIPLPFFRNKQHMSECVVLAISFSILDFVFDNQGQVNPEFLKASRRRQLSQKLKSRFFFAGLMIFVMSPFIALYLILVYFLTYFHEFRNDPGALGARTYNSLAKWKFREFNELDHLFNDRMNMSHPFAKRYIDMFPKRKTEQVARTVSFITGSIVAVLGLATIFDSEAFLTFEITPDRSVLFYVSILATLWAVARGNISDDNEVYDPEFAMKSIIEFTHYEPDHWRGRLHSTEVKNEFSELYKPRPQIFLEEILSILLTPLVLLVSLPNSTDQIVDFFREFTIHVDGLGYVCLFSVFNFQQGHANQKQAAAADAPDNREEYYSTKHGKMAASFYGFLDHYVINPKTGLPGNQLPGSRQQFQHPPSFPGLQSPTLAADMRHSRMMRERGRSSGVQIQGSQGRTPQFRTPMPQPSPMASILLDPHHQPAPGAFGSRSMHRSRQMAVPHRGGYMSDRDIIEEAVTEDGQDDARFGKLGDEDIDESGGALDESTWQTSPTKTLSRENSGANPQETEVGVLGLIHQFQQAHMHLRR.

The Cytoplasmic segment spans residues 1–226 (MASNIFSRLV…AGFWCIIVQR (226 aa)). Disordered regions lie at residues 16 to 37 (RSFY…RAGI) and 119 to 177 (LLLS…QGRP). The helical transmembrane segment at 227–247 (ILELVNAAFVAVFLTFLSQCV) threads the bilayer. Topologically, residues 248-275 (DYHKLPHSKKMEDIIIPKCTQNMSLVWN) are lumenal. Asn269 carries N-linked (GlcNAc...) asparagine glycosylation. Residues 276–296 (VGLWLFAIYFICRCFGLIIQL) traverse the membrane as a helical segment. The Cytoplasmic portion of the chain corresponds to 297–442 (RQLKHLRDFY…RQLSQKLKSR (146 aa)). The stretch at 443–463 (FFFAGLMIFVMSPFIALYLIL) is an intramembrane region. Over 464-539 (VYFLTYFHEF…ARTVSFITGS (76 aa)) the chain is Cytoplasmic. The chain crosses the membrane as a helical span at residues 540-560 (IVAVLGLATIFDSEAFLTFEI). Residues 561–564 (TPDR) are Lumenal-facing. A helical membrane pass occupies residues 565–585 (SVLFYVSILATLWAVARGNIS). At 586-633 (DDNEVYDPEFAMKSIIEFTHYEPDHWRGRLHSTEVKNEFSELYKPRPQ) the chain is on the cytoplasmic side. An N6-acetyllysine modification is found at Lys621. Residues 634–654 (IFLEEILSILLTPLVLLVSLP) lie within the membrane without spanning it. Topologically, residues 655–917 (NSTDQIVDFF…FQQAHMHLRR (263 aa)) are cytoplasmic. A disordered region spans residues 854 to 895 (DARFGKLGDEDIDESGGALDESTWQTSPTKTLSRENSGANPQ). Residues 875-895 (STWQTSPTKTLSRENSGANPQ) show a composition bias toward polar residues.

It belongs to the ATG9 family. In terms of assembly, homotrimer; forms a homotrimer with a central pore that forms a path between the two membrane leaflets. Interacts with HAT1. Acetylated by HAT1 at Lys-621, which increases the ability to bind vesicles during nutrient starvation induction. In terms of processing, phosphorylated by ATG1. ATG1 phosphorylation is required for preautophagosome elongation.

The protein resides in the preautophagosomal structure membrane. It localises to the cytoplasmic vesicle membrane. Its subcellular location is the vacuole membrane. It is found in the golgi apparatus membrane. The protein localises to the endoplasmic reticulum membrane. The catalysed reaction is a 1,2-diacyl-sn-glycero-3-phosphocholine(in) = a 1,2-diacyl-sn-glycero-3-phosphocholine(out). It carries out the reaction a 1,2-diacyl-sn-glycero-3-phospho-L-serine(in) = a 1,2-diacyl-sn-glycero-3-phospho-L-serine(out). It catalyses the reaction a 1,2-diacyl-sn-glycero-3-phosphoethanolamine(in) = a 1,2-diacyl-sn-glycero-3-phosphoethanolamine(out). The enzyme catalyses a 1,2-diacyl-sn-glycero-3-phospho-(1D-myo-inositol-3-phosphate)(in) = a 1,2-diacyl-sn-glycero-3-phospho-(1D-myo-inositol-3-phosphate)(out). Phospholipid scramblase involved in autophagy and cytoplasm to vacuole transport (Cvt) vesicle formation. Cycles between the preautophagosomal structure/phagophore assembly site (PAS) and the cytoplasmic vesicle pool and supplies membrane for the growing autophagosome. Lipid scramblase activity plays a key role in preautophagosomal structure/phagophore assembly by distributing the phospholipids that arrive through ATG2 from the cytoplasmic to the luminal leaflet of the bilayer, thereby driving autophagosomal membrane expansion. Required for mitophagy. Also involved in endoplasmic reticulum-specific autophagic process and is essential for the survival of cells subjected to severe ER stress. Different machineries are required for anterograde trafficking to the PAS during either the Cvt pathway or bulk autophagy and for retrograde trafficking. Plays a role in appressorium formation and pathogenicity. This chain is Autophagy-related protein 9, found in Pyricularia oryzae (strain 70-15 / ATCC MYA-4617 / FGSC 8958) (Rice blast fungus).